The sequence spans 270 residues: Putative phosphoenolpyruvate synthase regulatory protein (270 aa).

An ADP-binding site is contributed by 150 to 157 (GVSRSGKT).

This sequence belongs to the pyruvate, phosphate/water dikinase regulatory protein family. PSRP subfamily.

It carries out the reaction [pyruvate, water dikinase] + ADP = [pyruvate, water dikinase]-phosphate + AMP + H(+). It catalyses the reaction [pyruvate, water dikinase]-phosphate + phosphate + H(+) = [pyruvate, water dikinase] + diphosphate. In terms of biological role, bifunctional serine/threonine kinase and phosphorylase involved in the regulation of the phosphoenolpyruvate synthase (PEPS) by catalyzing its phosphorylation/dephosphorylation. In Cupriavidus metallidurans (strain ATCC 43123 / DSM 2839 / NBRC 102507 / CH34) (Ralstonia metallidurans), this protein is Putative phosphoenolpyruvate synthase regulatory protein.